Reading from the N-terminus, the 122-residue chain is Large ribosomal subunit protein bL12 (122 aa).

The protein belongs to the bacterial ribosomal protein bL12 family. Homodimer. Part of the ribosomal stalk of the 50S ribosomal subunit. Forms a multimeric L10(L12)X complex, where L10 forms an elongated spine to which 2 to 4 L12 dimers bind in a sequential fashion. Binds GTP-bound translation factors.

Forms part of the ribosomal stalk which helps the ribosome interact with GTP-bound translation factors. Is thus essential for accurate translation. This is Large ribosomal subunit protein bL12 from Neisseria lactamica.